Consider the following 1018-residue polypeptide: Fibronectin-binding protein A (1018 aa).

Residues 1–36 form the signal peptide; it reads MKNNLRYGIRKHKLGAASVFLGTMIVVGMGQDKEAA. The YSIRK-G/S signaling motif signature appears at 7–18; sequence YGIRKHKLGAAS. A ligand-binding A region region spans residues 37-511; it reads ASEQKTTTVE…SNKANGNGKN (475 aa). 2 disordered regions span residues 38–61 and 78–195; these read SEQK…SETQ and ATVT…ETGT. Composition is skewed to polar residues over residues 39-61 and 78-92; these read EQKT…SETQ and ATVT…QVTT. Positions 112 to 126 are enriched in basic and acidic residues; the sequence is TVKEEVVKEEAKPQV. A compositionally biased stretch (polar residues) spans 129-139; that stretch reads TTQSQDNSGDQ. The interval 194-511 is fibrinogen/elastin/tropoelastin-binding; it reads GTDVTSKVTV…SNKANGNGKN (318 aa). The interval 512-872 is fibronectin-binding; the sequence is GPIIQNNKFE…EGQQTIEEDT (361 aa). Residues 545 to 574 form a B-1 repeat; sequence EEYDSSTLDIDYHTAIDGGGGYVDGYIETI. Residues 545–604 form a 2 X approximate tandem repeats region; the sequence is EEYDSSTLDIDYHTAIDGGGGYVDGYIETIEETDSSAIDIDYHTAVDSEAGHVGGYTESS. The B-2 repeat unit spans residues 575-604; sequence EETDSSAIDIDYHTAVDSEAGHVGGYTESS. Disordered regions lie at residues 595–622, 740–813, and 827–997; these read GHVG…NSKH, LGYE…DIDF, and EIIE…GMLF. One copy of the D-1 repeat lies at 745-782; it reads GQNSGNQSFEEDTEEDKPKYEQGGNIVDIDFDSVPQIH. Residues 745–878 form a 4 X approximate tandem repeats region; the sequence is GQNSGNQSFE…EEDTTPPIVP (134 aa). The D-2 repeat unit spans residues 783 to 820; sequence GQNKGNQSFEEDTEKDKPKYEHGGNIIDIDFDSVPHIH. Residues 821–859 form a D-3 repeat; sequence GFNKHTEIIEEDTNKDKPSYQFGGHNSVDFEEDTLPKVS. Residues 827–838 show a composition bias toward basic and acidic residues; it reads EIIEEDTNKDKP. A D-4; truncated repeat occupies 860–878; the sequence is GQNEGQQTIEEDTTPPIVP. A compositionally biased stretch (pro residues) spans 875 to 938; sequence PIVPPTPPTP…PAEPGKPVPP (64 aa). WR repeat units follow at residues 879–892, 893–906, 907–920, 921–934, and 935–948; these read PTPP…EPET, PTPP…EPGK, and PVPP…KPSK. Residues 879-948 form a 5 X tandem repeats, Pro-rich (WR) region; it reads PTPPTPEVPS…AKEEPKKPSK (70 aa). The LPXTG sorting signal motif lies at 982 to 986; that stretch reads LPETG. At threonine 985 the chain carries Pentaglycyl murein peptidoglycan amidated threonine. The propeptide at 986 to 1018 is removed by sortase; the sequence is GGEESTNKGMLFGGLFSILGLALLRRNKKNHKA.

Its subcellular location is the secreted. It localises to the cell wall. Its function is as follows. Promotes bacterial attachment to multiple substrates, such as fibronectin (Fn), fibrinogen (Fg), elastin peptides and tropoelastin. This confers to S.aureus the ability to invade endothelial cells. Promotes adherence to and aggregation of activated platelets. The polypeptide is Fibronectin-binding protein A (Staphylococcus aureus (strain USA300)).